Consider the following 477-residue polypeptide: (R)-2-hydroxyglutaryl-CoA dehydratase, subunit alpha (477 aa).

It belongs to the FldB/FldC dehydratase alpha/beta subunit family. In terms of assembly, the (R)-2-hydroxyglutaryl-CoA dehydratase enzyme system is a heterodimer composed of an alpha subunit (HgdA) and a beta subunit (HgdB). [4Fe-4S] cluster serves as cofactor. The cofactor is FMN. It depends on Mg(2+) as a cofactor.

The protein resides in the cytoplasm. It catalyses the reaction (R)-2-hydroxyglutaryl-CoA = (2E)-glutaconyl-CoA + H2O. It participates in amino-acid degradation; L-glutamate degradation via hydroxyglutarate pathway; crotonoyl-CoA from L-glutamate: step 4/5. With respect to regulation, activated by the HgdC. Reversibly inactivated by oxidants such as 2-nitrophenol, 3-nitrophenol, 4-nitrophenol, 4-nitrobenzoate, carbonyl cyanide 4-(trifluoromethoxy)phenylhydrazone (FCCP) and chloramphenicol. Irreversibly inactivated by oxidants such as hydroxylamine and nitrite. In terms of biological role, involved in the fermentation of L-glutamate via the hydroxyglutarate pathway. Catalyzes the reversible syn-elimination of water from (R)-2-hydroxyglutaryl-CoA to yield (E)-glutaconyl-CoA. The dehydration mechanism involves a transient one electron reduction of the thioester from (R)-2-hydroxyglutaryl-CoA, generating a ketyl radical. Prior to (E)-glutaconyl-CoA formation, the ketyl radical is subsequently reoxidized by electron transfer back to the HgdA-HgdB complex (CompD) to avoid change in oxidation state of the substrate. The appropriate redox state of dehydratase HgdA-HgdB complex (CompD) is maintained by HgdC (CompA) via hydrolysis of ATP and ATP-dependent electron transfer. Since the electron is recycled, the dehydratase is able to perform several turnovers with only catalytic amounts of ATP and substoichiometric amounts of HgdC (CompA). The sequence is that of (R)-2-hydroxyglutaryl-CoA dehydratase, subunit alpha from Acidaminococcus fermentans (strain ATCC 25085 / DSM 20731 / CCUG 9996 / CIP 106432 / VR4).